The primary structure comprises 227 residues: Cytochrome c oxidase subunit 2 (227 aa).

Topologically, residues 1 to 14 (MAYPFQLGLQDATS) are mitochondrial intermembrane. Residues 15–45 (PIMEELTNFHDHTLMIVFLISSLVLYIISLM) traverse the membrane as a helical segment. The Mitochondrial matrix portion of the chain corresponds to 46–59 (LTTKLTHTSTMDAQ). Residues 60-87 (EVETIWTILPAAILVLIALPSLRILYMM) traverse the membrane as a helical segment. Topologically, residues 88 to 227 (DEINNPALTV…YFENWSASMI (140 aa)) are mitochondrial intermembrane. Cu cation contacts are provided by His-161, Cys-196, Glu-198, Cys-200, His-204, and Met-207. Residue Glu-198 coordinates Mg(2+). Tyr-218 bears the Phosphotyrosine mark.

Belongs to the cytochrome c oxidase subunit 2 family. In terms of assembly, component of the cytochrome c oxidase (complex IV, CIV), a multisubunit enzyme composed of 14 subunits. The complex is composed of a catalytic core of 3 subunits MT-CO1, MT-CO2 and MT-CO3, encoded in the mitochondrial DNA, and 11 supernumerary subunits COX4I, COX5A, COX5B, COX6A, COX6B, COX6C, COX7A, COX7B, COX7C, COX8 and NDUFA4, which are encoded in the nuclear genome. The complex exists as a monomer or a dimer and forms supercomplexes (SCs) in the inner mitochondrial membrane with NADH-ubiquinone oxidoreductase (complex I, CI) and ubiquinol-cytochrome c oxidoreductase (cytochrome b-c1 complex, complex III, CIII), resulting in different assemblies (supercomplex SCI(1)III(2)IV(1) and megacomplex MCI(2)III(2)IV(2)). Found in a complex with TMEM177, COA6, COX18, COX20, SCO1 and SCO2. Interacts with TMEM177 in a COX20-dependent manner. Interacts with COX20. Interacts with COX16. Cu cation is required as a cofactor.

It localises to the mitochondrion inner membrane. The catalysed reaction is 4 Fe(II)-[cytochrome c] + O2 + 8 H(+)(in) = 4 Fe(III)-[cytochrome c] + 2 H2O + 4 H(+)(out). Component of the cytochrome c oxidase, the last enzyme in the mitochondrial electron transport chain which drives oxidative phosphorylation. The respiratory chain contains 3 multisubunit complexes succinate dehydrogenase (complex II, CII), ubiquinol-cytochrome c oxidoreductase (cytochrome b-c1 complex, complex III, CIII) and cytochrome c oxidase (complex IV, CIV), that cooperate to transfer electrons derived from NADH and succinate to molecular oxygen, creating an electrochemical gradient over the inner membrane that drives transmembrane transport and the ATP synthase. Cytochrome c oxidase is the component of the respiratory chain that catalyzes the reduction of oxygen to water. Electrons originating from reduced cytochrome c in the intermembrane space (IMS) are transferred via the dinuclear copper A center (CU(A)) of subunit 2 and heme A of subunit 1 to the active site in subunit 1, a binuclear center (BNC) formed by heme A3 and copper B (CU(B)). The BNC reduces molecular oxygen to 2 water molecules using 4 electrons from cytochrome c in the IMS and 4 protons from the mitochondrial matrix. This is Cytochrome c oxidase subunit 2 (MT-CO2) from Rhabdomys pumilio (Four-striped grass mouse).